We begin with the raw amino-acid sequence, 641 residues long: Glycerol metabolism operon regulatory protein (641 aa).

The interval 1 to 318 is sensor domain; it reads MTTHTQDIGK…MRQLMTSQLG (318 aa). Residues 52 to 189 enclose the GAF domain; sequence ALLTIAQAAL…AIAREVGNSL (138 aa). The PAS domain maps to 203–265; sequence NQMYGLLESM…MLLRRAIKHA (63 aa). The Sigma-54 factor interaction domain occupies 327–552; it reads MSTDDPETRR…LNSIIENIAI (226 aa). Residues 355–362 and 415–424 contribute to the ATP site; these read GEEGVGKE and ANGGTLFLEK.

Its function is as follows. Transcriptional activator of the glycerol utilization dha operon. The polypeptide is Glycerol metabolism operon regulatory protein (Citrobacter freundii).